Consider the following 209-residue polypeptide: Ribonuclease HII (209 aa).

Residues 6–209 (SLEAGIDEAG…IKRMTNSRLF (204 aa)) form the RNase H type-2 domain. 3 residues coordinate a divalent metal cation: aspartate 12, glutamate 13, and aspartate 108.

Belongs to the RNase HII family. Mn(2+) is required as a cofactor. It depends on Mg(2+) as a cofactor.

The protein localises to the cytoplasm. It catalyses the reaction Endonucleolytic cleavage to 5'-phosphomonoester.. Its function is as follows. Endonuclease that specifically degrades the RNA of RNA-DNA hybrids. This chain is Ribonuclease HII, found in Caldivirga maquilingensis (strain ATCC 700844 / DSM 13496 / JCM 10307 / IC-167).